The sequence spans 260 residues: Phosphate import ATP-binding protein PstB 1 (260 aa).

The ABC transporter domain occupies 13–255 (VRVRDLNLWY…PHTKKAEDYI (243 aa)). 45-52 (GPSGCGKS) serves as a coordination point for ATP.

The protein belongs to the ABC transporter superfamily. Phosphate importer (TC 3.A.1.7) family. In terms of assembly, the complex is composed of two ATP-binding proteins (PstB), two transmembrane proteins (PstC and PstA) and a solute-binding protein (PstS).

It is found in the cell inner membrane. It catalyses the reaction phosphate(out) + ATP + H2O = ADP + 2 phosphate(in) + H(+). Functionally, part of the ABC transporter complex PstSACB involved in phosphate import. Responsible for energy coupling to the transport system. This chain is Phosphate import ATP-binding protein PstB 1, found in Chromohalobacter salexigens (strain ATCC BAA-138 / DSM 3043 / CIP 106854 / NCIMB 13768 / 1H11).